The sequence spans 233 residues: MKYKRVLLKLSGEFLTRNGFGIEPEATQALAREIKAAYDTGVQLAIVIGAGNLWRGARQGVGMDRATADYIGMLATIMNALALQDALESLGVPTRVQTALTITQVAEPYIRRRALRHLEKERIVIFGGGTGNPFFSTDTAAALRALEVGAEVVLMAKNKVDGVYSDDPRKNPEAVRFDELTYLEVLNRGLQVMDTTAITLCMEAGLPIVVFDIFKPGALVGIIQGEKVGTLIH.

ATP-binding positions include 9 to 12 (KLSG), Gly-51, and Arg-55. UMP contacts are provided by residues Asp-69 and 130–137 (TGNPFFST). Residues Asn-158, Tyr-164, and Asp-167 each contribute to the ATP site.

This sequence belongs to the UMP kinase family. In terms of assembly, homohexamer.

The protein localises to the cytoplasm. The catalysed reaction is UMP + ATP = UDP + ADP. Its pathway is pyrimidine metabolism; CTP biosynthesis via de novo pathway; UDP from UMP (UMPK route): step 1/1. With respect to regulation, inhibited by UTP. In terms of biological role, catalyzes the reversible phosphorylation of UMP to UDP. The protein is Uridylate kinase of Thermus thermophilus (strain ATCC BAA-163 / DSM 7039 / HB27).